The following is a 99-amino-acid chain: Accessory protein p12I (99 aa).

Positions R4–P11 match the SH3-binding motif. A helical membrane pass occupies residues L12–L32. The short motif at R33–P38 is the SH3-binding element. A helical transmembrane segment spans residues I48–L68. 2 consecutive short sequence motifs (SH3-binding) follow at residues P70–R77 and R88–P93.

Belongs to the HTLV-1 accessory protein p12I family. P12I is a homodimer. Interacts with human CANX, CALR, ATP6V0C, IL2RB, IL2RG. Binds to MHC-I heavy chains HLA-A2, HLA-B7 and HLA-Cw4. Post-translationally, ubiquitinated; a fraction of P12I is degraded via the ubiquitin system.

It is found in the host endoplasmic reticulum membrane. It localises to the host Golgi apparatus. Its subcellular location is the host cis-Golgi network membrane. Its function is as follows. p12I is a modulator of T-lymphocyte proliferation and immune function and may contribute to establish a persistent infection. Binds and down-modulates cell surface expression of interleukin-2 receptors IL2RB and IL2RG. Also down-modulates cell surface MHC-I molecules by binding to free immature MHC-I heavy chains in the ER and targeting them to the proteasome for degradation. Binding to IL2RB mediates recruitment of JAK1 and JAK3. As a result of this interaction, p12I increases DNA-binding and transcriptional activity of STAT5. The chain is Accessory protein p12I from Homo sapiens (Human).